We begin with the raw amino-acid sequence, 70 residues long: Putative membrane protein insertion efficiency factor (70 aa).

This sequence belongs to the UPF0161 family.

It localises to the cell inner membrane. Its function is as follows. Could be involved in insertion of integral membrane proteins into the membrane. The polypeptide is Putative membrane protein insertion efficiency factor (Methylobacillus flagellatus (strain ATCC 51484 / DSM 6875 / VKM B-1610 / KT)).